The following is a 664-amino-acid chain: Bifunctional 3-dehydroquinate synthase/phosphatase (664 aa).

The tract at residues 1 to 352 is 3-dehydroquinate synthase; sequence MKKIFDDIYV…KIIDKYKNNF (352 aa). NAD(+) contacts are provided by residues 61-66, 95-99, 119-120, lysine 132, lysine 141, and 159-162; these read DGEEYK, GVICD, TS, and FLKT. Residues glutamate 174, histidine 238, and histidine 255 each coordinate Zn(2+). Positions 353–664 are GPPA/PPX; the sequence is LRASIDIGTN…GAILEGVENK (312 aa).

This sequence in the N-terminal section; belongs to the sugar phosphate cyclases superfamily. Dehydroquinate synthase family. In the C-terminal section; belongs to the GppA/Ppx family. Monomer. It depends on NAD(+) as a cofactor. The cofactor is Co(2+). Zn(2+) serves as cofactor.

The protein localises to the cytoplasm. It catalyses the reaction 7-phospho-2-dehydro-3-deoxy-D-arabino-heptonate = 3-dehydroquinate + phosphate. It participates in metabolic intermediate biosynthesis; chorismate biosynthesis; chorismate from D-erythrose 4-phosphate and phosphoenolpyruvate: step 2/7. In Fusobacterium nucleatum subsp. nucleatum (strain ATCC 25586 / DSM 15643 / BCRC 10681 / CIP 101130 / JCM 8532 / KCTC 2640 / LMG 13131 / VPI 4355), this protein is Bifunctional 3-dehydroquinate synthase/phosphatase (aroB).